Reading from the N-terminus, the 270-residue chain is uncharacterized protein (270 aa).

Possibly involved in pGI2 replication mechanism. This is an uncharacterized protein from Bacillus thuringiensis.